We begin with the raw amino-acid sequence, 701 residues long: Cytosolic endo-beta-N-acetylglucosaminidase 2 (701 aa).

Belongs to the glycosyl hydrolase 85 family.

Its subcellular location is the cytoplasm. It localises to the cytosol. It carries out the reaction an N(4)-(oligosaccharide-(1-&gt;3)-[oligosaccharide-(1-&gt;6)]-beta-D-Man-(1-&gt;4)-beta-D-GlcNAc-(1-&gt;4)-alpha-D-GlcNAc)-L-asparaginyl-[protein] + H2O = an oligosaccharide-(1-&gt;3)-[oligosaccharide-(1-&gt;6)]-beta-D-Man-(1-&gt;4)-D-GlcNAc + N(4)-(N-acetyl-beta-D-glucosaminyl)-L-asparaginyl-[protein]. Functionally, endoglycosidase that releases N-glycans from glycoproteins by cleaving the beta-1,4-glycosidic bond in the N,N'-diacetylchitobiose core. Involved in the production of high-mannose type N-glycans during plant development and fruit maturation. This is Cytosolic endo-beta-N-acetylglucosaminidase 2 from Arabidopsis thaliana (Mouse-ear cress).